Here is a 322-residue protein sequence, read N- to C-terminus: MIQHLALDALQRHLAGSPLYGWATSLPAQISARIEEGHGDLARWWSAVQRLPQVPAPKVDLAQRFALHSDHDAALQAQMKEALQGLIPWRKGPFDFFGVQVDTEWRSDWKWERVSPHVELRGKRVLDVGCGNGYYQWRMLGAGAESVVGVDPNWLFLCQFLAAKRYLPELPAWHLPLALEDLPEKLEGFDTVFSMGVLYHRRSPIDHLLALKDCLKRGGELVLETLVVEGDASTVLVPEDRYAQMRNVWFLPSVAALELWLRRAGFADARCVDVSLTSVEEQRSTEWMRFQSLPEFLDPQDRSRTVEGLPAPMRATLVARKP.

Carboxy-S-adenosyl-L-methionine is bound by residues Lys-91, Trp-105, Lys-110, Gly-129, 179 to 180, Met-195, Tyr-199, and Arg-314; that span reads LE.

Belongs to the class I-like SAM-binding methyltransferase superfamily. CmoB family. As to quaternary structure, homotetramer.

It catalyses the reaction carboxy-S-adenosyl-L-methionine + 5-hydroxyuridine(34) in tRNA = 5-carboxymethoxyuridine(34) in tRNA + S-adenosyl-L-homocysteine + H(+). Catalyzes carboxymethyl transfer from carboxy-S-adenosyl-L-methionine (Cx-SAM) to 5-hydroxyuridine (ho5U) to form 5-carboxymethoxyuridine (cmo5U) at position 34 in tRNAs. The protein is tRNA U34 carboxymethyltransferase of Pseudomonas aeruginosa (strain ATCC 15692 / DSM 22644 / CIP 104116 / JCM 14847 / LMG 12228 / 1C / PRS 101 / PAO1).